Reading from the N-terminus, the 951-residue chain is Sodium/potassium exporting P-type ATPase 1 (951 aa).

Residues 1-57 (MMGANSTEWHGQSVEQVTELLGTDVERGLKESVVGQLQKQFGPNELKGQRGVNPWKV) are Cytoplasmic-facing. Residues 58 to 78 (LLAQFTNGLTVILLIATVVSF) form a helical membrane-spanning segment. Residues 79 to 82 (AVQD) are Extracellular-facing. Residues 83 to 103 (HAEGGVLAFVIIFNASVGFVQ) form a helical membrane-spanning segment. The Cytoplasmic portion of the chain corresponds to 104 to 247 (EYRAEKTMDA…TPMQKRLNRM (144 aa)). A helical transmembrane segment spans residues 248 to 268 (AYILFGISLVLAVIVFAVNKF). At 269–273 (EFNTD) the chain is on the extracellular side. The chain crosses the membrane as a helical span at residues 274-294 (IIIYAVSLGIAVIPEGLIAVI). The Cytoplasmic segment spans residues 295–717 (TIVMALGVRR…GRRIFSNIRK (423 aa)). Asp330 acts as the 4-aspartylphosphate intermediate in catalysis. The Mg(2+) site is built by Asp330 and Thr332. Positions 332, 414, 467, 511, 575, 576, 577, 636, and 642 each coordinate ATP. Asp661 lines the Mg(2+) pocket. Asn664 contributes to the ATP binding site. Residues 718 to 738 (FILHLVSTNVGEVIVLIIGLA) traverse the membrane as a helical segment. Topologically, residues 739 to 743 (FKDRN) are extracellular. A helical membrane pass occupies residues 744 to 764 (GVSVFPLAPVQILFMNMVTST). The Cytoplasmic portion of the chain corresponds to 765 to 799 (PPAMALGVEAASKDTMKVPPHTKGLFGKEVLADMM). A helical transmembrane segment spans residues 800 to 820 (VYGIIMGSLILVDWVLVIYAF). Residues 821–840 (GDSQLGLECNSDRMLNECNT) are Extracellular-facing. The helical transmembrane segment at 841–861 (VFRARSTIMVALIWMLLLHAY) threads the bilayer. Over 862–885 (NCRHPRASLFTAEGGGASKLFSNR) the chain is Cytoplasmic. The helical transmembrane segment at 886 to 906 (LLVWSVLLGSLMPIPTVYIPT) threads the bilayer. Topologically, residues 907 to 916 (LNTKIFKQET) are extracellular. A helical membrane pass occupies residues 917 to 937 (ISWEWSIVVVSVVAFFFLSEL). Topologically, residues 938-951 (YKLIKRNVMTSRVI) are cytoplasmic.

Belongs to the cation transport ATPase (P-type) (TC 3.A.3) family. Type IID subfamily. Requires Mg(2+) as cofactor. Post-translationally, the active site is phosphorylated in presence of sodium or potassium and in conditions of higher pH. Not phosphorylated in presence of calcium ions.

The protein localises to the cell membrane. The enzyme catalyses Na(+)(in) + ATP + H2O = Na(+)(out) + ADP + phosphate + H(+). The catalysed reaction is K(+)(in) + ATP + H2O = K(+)(out) + ADP + phosphate + H(+). Its function is as follows. Catalyzes the hydrolysis of ATP coupled with the export of sodium and potassium from the cell. Appears to export potassium more efficiently than sodium. May transport other cations such as lithium. Sodium/potassium efflux ATPases are involved in salt tolerance and maintaining the membrane potential across the plasma membrane in high salinity (Na+) or alkaline (K+) environments. This is Sodium/potassium exporting P-type ATPase 1 from Marchantia polymorpha (Common liverwort).